The following is a 190-amino-acid chain: Putative 3-methyladenine DNA glycosylase (190 aa).

Belongs to the DNA glycosylase MPG family.

This chain is Putative 3-methyladenine DNA glycosylase, found in Corynebacterium efficiens (strain DSM 44549 / YS-314 / AJ 12310 / JCM 11189 / NBRC 100395).